The following is a 25-amino-acid chain: Antifungal protein 1 (25 aa).

Residues 1-25 (QSERFEQQMQGQDFSHDERFLSQAA) are disordered. Residues 14 to 25 (FSHDERFLSQAA) show a composition bias toward basic and acidic residues.

It belongs to the 2S seed storage albumins family. As to expression, expressed in seed (at protein level). Not detected in pulp, stems and leaves.

Functionally, has strong antifungal activity against T.harzianum, F.oxysporum and A.fumigatus with IC(50) values of 32 ug/ml, 34 ug/ml and 40 ug/ml, restectively. Lacks antifungal activity against R.solani, P.brasiliensis and C.albicans. This chain is Antifungal protein 1, found in Passiflora edulis (Passion fruit).